Reading from the N-terminus, the 240-residue chain is 1-(5-phosphoribosyl)-5-[(5-phosphoribosylamino)methylideneamino] imidazole-4-carboxamide isomerase (240 aa).

Residue Asp-10 is the Proton acceptor of the active site. Asp-132 functions as the Proton donor in the catalytic mechanism.

The protein belongs to the HisA/HisF family.

The protein resides in the cytoplasm. It carries out the reaction 1-(5-phospho-beta-D-ribosyl)-5-[(5-phospho-beta-D-ribosylamino)methylideneamino]imidazole-4-carboxamide = 5-[(5-phospho-1-deoxy-D-ribulos-1-ylimino)methylamino]-1-(5-phospho-beta-D-ribosyl)imidazole-4-carboxamide. Its pathway is amino-acid biosynthesis; L-histidine biosynthesis; L-histidine from 5-phospho-alpha-D-ribose 1-diphosphate: step 4/9. This is 1-(5-phosphoribosyl)-5-[(5-phosphoribosylamino)methylideneamino] imidazole-4-carboxamide isomerase from Methanocella arvoryzae (strain DSM 22066 / NBRC 105507 / MRE50).